We begin with the raw amino-acid sequence, 242 residues long: uncharacterized protein (242 aa).

The protein belongs to the IIV-6 415R family.

This is an uncharacterized protein from Invertebrate iridescent virus 6 (IIV-6).